The following is a 483-amino-acid chain: Cobyric acid synthase (483 aa).

Residues 251-438 (ALIVAVPMLP…LHGVFSADRF (188 aa)) form the GATase cobBQ-type domain. The active-site Nucleophile is Cys333. His430 is an active-site residue.

It belongs to the CobB/CobQ family. CobQ subfamily.

It functions in the pathway cofactor biosynthesis; adenosylcobalamin biosynthesis. In terms of biological role, catalyzes amidations at positions B, D, E, and G on adenosylcobyrinic A,C-diamide. NH(2) groups are provided by glutamine, and one molecule of ATP is hydrogenolyzed for each amidation. The protein is Cobyric acid synthase of Brucella canis (strain ATCC 23365 / NCTC 10854 / RM-666).